Reading from the N-terminus, the 287-residue chain is 2-dehydro-3-deoxyphosphooctonate aldolase (287 aa).

The protein belongs to the KdsA family.

The protein resides in the cytoplasm. The enzyme catalyses D-arabinose 5-phosphate + phosphoenolpyruvate + H2O = 3-deoxy-alpha-D-manno-2-octulosonate-8-phosphate + phosphate. It participates in carbohydrate biosynthesis; 3-deoxy-D-manno-octulosonate biosynthesis; 3-deoxy-D-manno-octulosonate from D-ribulose 5-phosphate: step 2/3. Its pathway is bacterial outer membrane biogenesis; lipopolysaccharide biosynthesis. The polypeptide is 2-dehydro-3-deoxyphosphooctonate aldolase (Magnetococcus marinus (strain ATCC BAA-1437 / JCM 17883 / MC-1)).